Here is a 187-residue protein sequence, read N- to C-terminus: Ethylene-responsive transcription factor ERF015 (187 aa).

A DNA-binding region (AP2/ERF) is located at residues 26-83 (CYRGVRKRSWGKWVSEIRVPKTGRRIWLGSYDAPEKAARAYDAALFCIRGEKGVYNFP).

It belongs to the AP2/ERF transcription factor family. ERF subfamily.

It is found in the nucleus. Probably acts as a transcriptional activator. Binds to the GCC-box pathogenesis-related promoter element. May be involved in the regulation of gene expression by stress factors and by components of stress signal transduction pathways. This Arabidopsis thaliana (Mouse-ear cress) protein is Ethylene-responsive transcription factor ERF015 (ERF015).